Here is a 22-residue protein sequence, read N- to C-terminus: MICOS complex subunit MIC60 (22 aa).

It belongs to the MICOS complex subunit Mic60 family. Component of the mitochondrial contact site and cristae organizing system (MICOS) complex, composed of at least MICOS10/MIC10, CHCHD3/MIC19, CHCHD6/MIC25, APOOL/MIC27, IMMT/MIC60, APOO/MIC23/MIC26 and MICOS13/MIC13. This complex was also known under the names MINOS or MitOS complex. The MICOS complex associates with mitochondrial outer membrane proteins SAMM50, MTX1 and MTX2 (together described as components of the mitochondrial outer membrane sorting assembly machinery (SAM) complex) and DNAJC11, mitochondrial inner membrane protein TMEM11 and with HSPA9. The MICOS and SAM complexes together with DNAJC11 are part of a large protein complex spanning both membranes termed the mitochondrial intermembrane space bridging (MIB) complex. Interacts with HSPA1A/HSPA1B and OPA1, preferentially with the soluble OPA1 form. Interacts with MICOS13/MIC13, MICOS10/MIC10, CHCHD3/MIC19, CHCHD6/MIC25, SAMM50 and TMEM11. Interacts with APOO/MIC23/MIC26 and APOOL/MIC27. Interacts with ARMC1. Interacts with ARMC12.

The protein localises to the mitochondrion inner membrane. Its subcellular location is the mitochondrion. In terms of biological role, component of the MICOS complex, a large protein complex of the mitochondrial inner membrane that plays crucial roles in the maintenance of crista junctions, inner membrane architecture, and formation of contact sites to the outer membrane. Plays an important role in the maintenance of the MICOS complex stability and the mitochondrial cristae morphology. The polypeptide is MICOS complex subunit MIC60 (Mesocricetus auratus (Golden hamster)).